The sequence spans 331 residues: Outer membrane lipoprotein PM1514 (331 aa).

Positions 1-20 (MQYFDIKKSLPVFCSLLITA) are cleaved as a signal peptide. Cys-21 is lipidated: N-palmitoyl cysteine. The S-diacylglycerol cysteine moiety is linked to residue Cys-21.

The protein resides in the cell outer membrane. It localises to the cell surface. The polypeptide is Outer membrane lipoprotein PM1514 (Pasteurella multocida (strain Pm70)).